The chain runs to 293 residues: ATP synthase gamma chain (293 aa).

It belongs to the ATPase gamma chain family. F-type ATPases have 2 components, CF(1) - the catalytic core - and CF(0) - the membrane proton channel. CF(1) has five subunits: alpha(3), beta(3), gamma(1), delta(1), epsilon(1). CF(0) has three main subunits: a, b and c.

Its subcellular location is the cell membrane. Its function is as follows. Produces ATP from ADP in the presence of a proton gradient across the membrane. The gamma chain is believed to be important in regulating ATPase activity and the flow of protons through the CF(0) complex. This chain is ATP synthase gamma chain, found in Streptococcus agalactiae serotype III (strain NEM316).